The primary structure comprises 273 residues: MAAQNAFEQKKRAILNEIDSTQPDLSPKGTIDELCLPIIDLINASADMVTTSSCSGRVSVFLEGTKSYNGEVKIGGKGQGGKWLYVTHDREKVIGWLDELKSKSEFSFELSGKEIPTEKVTGSIRYILYKYEPFILHVKCRDFQAASKLYNTAMSCGFRESGIGSNNLVAIRINIKLDVPLGYLDETSGTLKFFVTPEYVSVLDSLSLSKFDENTRKMQALYDRIEKELINCAPDVNSKVNITPIETKEERRERKKREGMERQRQLKSPQNVL.

2 positions are modified to phosphoserine: S26 and S238. Positions 243 to 273 are disordered; sequence TPIETKEERRERKKREGMERQRQLKSPQNVL. The span at 246-264 shows a compositional bias: basic and acidic residues; that stretch reads ETKEERRERKKREGMERQR.

This sequence belongs to the TYW3 family.

It carries out the reaction 4-demethyl-7-[(3S)-3-amino-3-carboxypropyl]wyosine(37) in tRNA(Phe) + S-adenosyl-L-methionine = 7-[(3S)-3-amino-3-carboxypropyl]wyosine(37) in tRNA(Phe) + S-adenosyl-L-homocysteine + H(+). It participates in tRNA modification; wybutosine-tRNA(Phe) biosynthesis. Functionally, S-adenosyl-L-methionine-dependent methyltransferase that acts as a component of the wybutosine biosynthesis pathway. Wybutosine is a hyper modified guanosine with a tricyclic base found at the 3'-position adjacent to the anticodon of eukaryotic phenylalanine tRNA. Probably methylates N-4 position of wybutosine-86 to produce wybutosine-72. The protein is tRNA wybutosine-synthesizing protein 3 (TYW3) of Saccharomyces cerevisiae (strain ATCC 204508 / S288c) (Baker's yeast).